Reading from the N-terminus, the 389-residue chain is NADH-quinone oxidoreductase subunit D (389 aa).

The protein belongs to the complex I 49 kDa subunit family. As to quaternary structure, NDH-1 is composed of 14 different subunits. Subunits NuoB, C, D, E, F, and G constitute the peripheral sector of the complex.

Its subcellular location is the cell inner membrane. It catalyses the reaction a quinone + NADH + 5 H(+)(in) = a quinol + NAD(+) + 4 H(+)(out). NDH-1 shuttles electrons from NADH, via FMN and iron-sulfur (Fe-S) centers, to quinones in the respiratory chain. The immediate electron acceptor for the enzyme in this species is believed to be ubiquinone. Couples the redox reaction to proton translocation (for every two electrons transferred, four hydrogen ions are translocated across the cytoplasmic membrane), and thus conserves the redox energy in a proton gradient. In Rickettsia typhi (strain ATCC VR-144 / Wilmington), this protein is NADH-quinone oxidoreductase subunit D.